The sequence spans 279 residues: Replication protein A 32 kDa subunit A (279 aa).

Residues 1–39 form a disordered region; that stretch reads MMSFSQPDAFSPSQFTSSQNAAADSTTPSKSRGASSTMP. The segment at residues 71–145 is a DNA-binding region (OB); the sequence is VRLVGLVSGK…RATAFAIRPV (75 aa). Residues 181–210 are disordered; that stretch reads GSSSSNGFSEMTTPTSVKSNPAPVLSVTNG. Residues 190–199 show a composition bias toward polar residues; sequence EMTTPTSVKS.

It belongs to the replication factor A protein 2 family. In terms of assembly, heterotrimer of RPA1, RPA2 and RPA3 (canonical replication protein A complex). Interacts with RPA1A, RPA1B and RPA3. In terms of processing, phosphorylated in a cell-cycle-dependent manner (from the S phase until mitosis). In response to DNA damage, recruited to DNA-repair nuclear foci, as a hypophosphorylated form. In terms of tissue distribution, expressed in root tips, roots, shoot apical meristem (SAM), young leaves, flag leaves and ears, and at lower levels in mature leaves.

The protein resides in the nucleus. Component of the replication protein A complex (RPA) required for DNA recombination, repair and replication. The activity of RPA is mediated by single-stranded DNA binding and protein interactions. The protein is Replication protein A 32 kDa subunit A (RPA2A) of Oryza sativa subsp. japonica (Rice).